Here is a 478-residue protein sequence, read N- to C-terminus: MPINSESCPLCKVHSNTIKKEDEDEEDNKTSWIQCSKCKVWYHVHCLDLPTDEIDQIVIYHCPECVPKYGESTYKRKSKRARVSIDYQSLNEGDTFAIDKSSHFHLHNFLNFKGETNINVIDKLTKTYALNTQMEKPILIPQADLSKNGMQLPIEKNEITIDYITDCCGEDTPLEVMDVISQQGISPPWKLKQWREYFKTNEEKRDRIRNVISLEISDVAKLGVDFTRPKCVRDMDVVDRVWIEEDEQKRSKVTKYCLMSVKNSFTDFHIDFGGTSVYYTVLSGAKTFLFFPPTDNNLELYKSWCLEPSQNFIWYPEYTITKNKKKIKPTGGFKVDLQPGDLFIIPSGWIHAVHTPQDSIVIGGNYLTIRDMVMQLKINEIERETKVPTKFRFPMFNKVLWLTAWYYYNHQNEFQSDIGEDEDGNAILTRLIGHLQGHLELSKTNATAKRSIPKTIGKPMVFINKLLAWKEDLYGTAV.

A PHD-type zinc finger spans residues 5–68; it reads SESCPLCKVH…IYHCPECVPK (64 aa). The JmjC domain maps to 217–383; it reads SDVAKLGVDF…MQLKINEIER (167 aa). Thr266 is a substrate binding site. 2 residues coordinate Fe cation: His269 and Asp271. Lys286 is a substrate binding site. His351 contacts Fe cation.

It belongs to the JHDM1 histone demethylase family. Fe(2+) is required as a cofactor.

Its subcellular location is the nucleus. The catalysed reaction is N(6),N(6)-dimethyl-L-lysyl(36)-[histone H3] + 2 2-oxoglutarate + 2 O2 = L-lysyl(36)-[histone H3] + 2 formaldehyde + 2 succinate + 2 CO2. Functionally, histone demethylase that specifically demethylates 'Lys-36' of histone H3, thereby playing a central role in histone code. The chain is JmjC domain-containing histone demethylation protein 1 (JHD1) from Candida albicans (strain SC5314 / ATCC MYA-2876) (Yeast).